Consider the following 494-residue polypeptide: Aldehyde dehydrogenase (494 aa).

Gly-223–Gly-228 provides a ligand contact to NAD(+). Active-site residues include Glu-245 and Cys-279.

Belongs to the aldehyde dehydrogenase family.

It carries out the reaction an aldehyde + NAD(+) + H2O = a carboxylate + NADH + 2 H(+). The protein operates within mycotoxin biosynthesis. Functionally, aldehyde dehydrogenase; part of the gene cluster that mediates the biosynthesis of the selective antifungal agent ascochitine, an o-quinone methide that plays a possible protective role against other microbial competitors in nature and is considered to be important for pathogenicity of legume-associated Didymella species. The pathway probably begins with the synthesis of a keto-aldehyde intermediate by the ascochitine non-reducing polyketide synthase pksAC from successive condensations of 4 malonyl-CoA units, presumably with a simple acetyl-CoA starter unit. Release of the keto-aldehyde intermediate is consistent with the presence of the C-terminal reductive release domain. The HR-PKS (orf7) probably makes a diketide starter unit which is passed to the non-reducing polyketide synthase pksAC for further extension, producing ascochital and ascochitine. The aldehyde dehydrogenase (orf1), the 2-oxoglutarate-dependent dioxygenase (orf3) and the dehydrogenase (orf9) are probably involved in subsequent oxidations of methyl groups to the carboxylic acid of the heterocyclic ring. The ascochitine gene cluster also includes a gene encoding a short peptide with a cupin domain (orf2) that is often found in secondary metabolite gene clusters and which function has still to be determined. In Didymella fabae (Leaf and pod spot disease fungus), this protein is Aldehyde dehydrogenase.